The following is a 502-amino-acid chain: Alpha-ketoglutarate-dependent dioxygenase FTO (502 aa).

The interval 32–324 (TPKDDEFYQQ…SSTHRVAECS (293 aa)) is fe2OG dioxygenase domain. Substrate-binding residues include Arg96 and Tyr108. Asn202 provides a ligand contact to 2-oxoglutarate. Residues 210–221 (PYLKEEPYFGMG) form a loop L1; predicted to block binding of double-stranded DNA or RNA region. Lys213 is subject to N6-acetyllysine. 2 residues coordinate Fe cation: His228 and Asp230. 228 to 231 (HHDE) contacts substrate. Tyr292 provides a ligand contact to 2-oxoglutarate. A Fe cation-binding site is contributed by His304. 2-oxoglutarate is bound by residues 313 to 315 (RFS), Thr317, and Arg319.

It belongs to the fto family. In terms of assembly, monomer. May also exist as homodimer. Fe(2+) is required as a cofactor. In terms of tissue distribution, ubiquitous. Detected in brain, brain cortex, hypothalamus, cerebellum, liver, pancreas, heart, kidney, white adipose tissue and skeletal muscle. Most abundant in the brain, particularly in hypothalamic nuclei governing energy balance.

The protein resides in the nucleus. It localises to the nucleus speckle. The protein localises to the cytoplasm. It carries out the reaction a 5'-end (N(7)-methyl 5'-triphosphoguanosine)-(N(6),2'-O-dimethyladenosine) in mRNA + 2-oxoglutarate + O2 = a 5'-end (N(7)-methyl 5'-triphosphoguanosine)-(2'-O-methyladenosine) in mRNA + formaldehyde + succinate + CO2. The enzyme catalyses an N(6)-methyladenosine in mRNA + 2-oxoglutarate + O2 = an adenosine in mRNA + formaldehyde + succinate + CO2. It catalyses the reaction N(6)-methyladenosine in U6 snRNA + 2-oxoglutarate + O2 = adenosine in U6 snRNA + formaldehyde + succinate + CO2. The catalysed reaction is a 5'-end (N(7)-methyl 5'-triphosphoguanosine)-(N(6),2'-O-dimethyladenosine) in U6 snRNA + 2-oxoglutarate + O2 = a 5'-end (N(7)-methyl 5'-triphosphoguanosine)-(2'-O-methyladenosine) in U6 snRNA + formaldehyde + succinate + CO2. It carries out the reaction an N(1)-methyladenosine in tRNA + 2-oxoglutarate + O2 = an adenosine in tRNA + formaldehyde + succinate + CO2. Its activity is regulated as follows. Activated by ascorbate. Inhibited by N-oxalylglycine, fumarate and succinate. In terms of biological role, RNA demethylase that mediates oxidative demethylation of different RNA species, such as mRNAs, tRNAs and snRNAs, and acts as a regulator of fat mass, adipogenesis and energy homeostasis. Specifically demethylates N(6)-methyladenosine (m6A) RNA, the most prevalent internal modification of messenger RNA (mRNA) in higher eukaryotes. M6A demethylation by FTO affects mRNA expression and stability. Also able to demethylate m6A in U6 small nuclear RNA (snRNA). Mediates demethylation of N(6),2'-O-dimethyladenosine cap (m6A(m)), by demethylating the N(6)-methyladenosine at the second transcribed position of mRNAs and U6 snRNA. Demethylation of m6A(m) in the 5'-cap by FTO affects mRNA stability by promoting susceptibility to decapping. Also acts as a tRNA demethylase by removing N(1)-methyladenine from various tRNAs. Has no activity towards 1-methylguanine. Has no detectable activity towards double-stranded DNA. Also able to repair alkylated DNA and RNA by oxidative demethylation: demethylates single-stranded RNA containing 3-methyluracil, single-stranded DNA containing 3-methylthymine and has low demethylase activity towards single-stranded DNA containing 1-methyladenine or 3-methylcytosine. Ability to repair alkylated DNA and RNA is however unsure in vivo. Involved in the regulation of fat mass, adipogenesis and body weight, thereby contributing to the regulation of body size and body fat accumulation. Involved in the regulation of thermogenesis and the control of adipocyte differentiation into brown or white fat cells. Regulates activity of the dopaminergic midbrain circuitry via its ability to demethylate m6A in mRNAs. The sequence is that of Alpha-ketoglutarate-dependent dioxygenase FTO from Mus musculus (Mouse).